The sequence spans 202 residues: dITP/XTP pyrophosphatase (202 aa).

10 to 15 (TGNAGK) is a binding site for substrate. The Mg(2+) site is built by D46 and D75. D75 (proton acceptor) is an active-site residue. Substrate is bound by residues S76, 160–163 (FGYD), K183, and 188–189 (HR).

It belongs to the HAM1 NTPase family. In terms of assembly, homodimer. Mg(2+) is required as a cofactor.

The enzyme catalyses XTP + H2O = XMP + diphosphate + H(+). It carries out the reaction dITP + H2O = dIMP + diphosphate + H(+). It catalyses the reaction ITP + H2O = IMP + diphosphate + H(+). Pyrophosphatase that catalyzes the hydrolysis of nucleoside triphosphates to their monophosphate derivatives, with a high preference for the non-canonical purine nucleotides XTP (xanthosine triphosphate), dITP (deoxyinosine triphosphate) and ITP. Seems to function as a house-cleaning enzyme that removes non-canonical purine nucleotides from the nucleotide pool, thus preventing their incorporation into DNA/RNA and avoiding chromosomal lesions. The protein is dITP/XTP pyrophosphatase of Idiomarina loihiensis (strain ATCC BAA-735 / DSM 15497 / L2-TR).